The following is a 219-amino-acid chain: MSLGLVGRKVGMTRIFTAEGDSIPVTVLDVSDNRVTQIKTVETDGYTAVQVAFGTRRASRVTKPLAGHLAKAGVQAGEILKEFQIDAAKAAELSNGTVVGPDLFEVGQKVDVQGVSIGKGYAGTIKRYNFASGRASHGNSRSHNVPGSIGMAQDPGRVFPGKRMTGHMGDDTVTVQNLEIARIDADRKLLLVKGAVPGAKGGKVFVTPAVKTRAVKGAK.

Residues 134 to 153 (RASHGNSRSHNVPGSIGMAQ) are disordered. An N5-methylglutamine modification is found at Q153.

It belongs to the universal ribosomal protein uL3 family. Part of the 50S ribosomal subunit. Forms a cluster with proteins L14 and L19. Methylated by PrmB.

Its function is as follows. One of the primary rRNA binding proteins, it binds directly near the 3'-end of the 23S rRNA, where it nucleates assembly of the 50S subunit. The chain is Large ribosomal subunit protein uL3 from Paraburkholderia phytofirmans (strain DSM 17436 / LMG 22146 / PsJN) (Burkholderia phytofirmans).